A 435-amino-acid chain; its full sequence is Protein SUPPRESSOR OF K(+) TRANSPORT GROWTH DEFECT 1 (435 aa).

The 66-residue stretch at 7 to 72 folds into the MIT domain; that stretch reads EQAIEYVKQA…LRRAEEIRAV (66 aa). The segment at 73-113 is disordered; sequence LDEGGSGPGSNGDAAVATRPKTKPKDGEGGGKDGEDPEQSK. The segment covering 95–113 has biased composition (basic and acidic residues); that stretch reads KPKDGEGGGKDGEDPEQSK. Position 172-179 (172-179) interacts with ATP; it reads GPPGTGKS.

The protein belongs to the AAA ATPase family. In terms of assembly, monomer or homodimer (in nucleotide-free form). Decamer, dodecamer or tetradecamer of two stacked respective homooligomeric rings (when bound to ATP); the dodecameric form seems to be predominant. Interacts with members of the ESCRT-III subcomplex such as LIP5, VPS60-1, VPS2.1, VPS20.1, VPS20.2, VPS24-1, VPS32.1, VPS32.2, CHMP1A and VPS24. Binds to PROS/At4g24370. In terms of tissue distribution, mostly expressed in leaves, to a lower extent in seeds, and barely in roots and flowers (at protein level). Particularly expressed in trichomes.

It localises to the cytoplasm. The protein resides in the nucleus. It is found in the endosome. The protein localises to the multivesicular body membrane. Its subcellular location is the prevacuolar compartment membrane. The enzyme catalyses ATP + H2O = ADP + phosphate + H(+). Its activity is regulated as follows. Activated by LIP5 and PROS. In terms of biological role, involved in the transport of biosynthetic membrane proteins from the prevacuolar/endosomal compartment to the vacuole. Required for multivesicular body (MVB) protein sorting. Catalyzes the ATP-dependent dissociation of class E VPS proteins from endosomal membranes, such as the disassembly of the ESCRT-III complex. May also regulate cell cycle. Required during seed development for the formation of mucilage in seed coat and testa. Involved in the maintenance of Na(+)/K(+) homeostasis under salt stress. Required for cell expansion. The protein is Protein SUPPRESSOR OF K(+) TRANSPORT GROWTH DEFECT 1 of Arabidopsis thaliana (Mouse-ear cress).